The following is a 93-amino-acid chain: Small ribosomal subunit protein uS19m (93 aa).

This sequence belongs to the universal ribosomal protein uS19 family. As to quaternary structure, component of the mitochondrial small ribosomal subunit (mt-SSU). Mature yeast 74S mitochondrial ribosomes consist of a small (37S) and a large (54S) subunit. The 37S small subunit contains a 15S ribosomal RNA (15S mt-rRNA) and at least 32 different proteins. The 54S large subunit contains a 21S rRNA (21S mt-rRNA) and at least 45 different proteins.

The protein resides in the mitochondrion. In terms of biological role, component of the mitochondrial ribosome (mitoribosome), a dedicated translation machinery responsible for the synthesis of mitochondrial genome-encoded proteins, including at least some of the essential transmembrane subunits of the mitochondrial respiratory chain. The mitoribosomes are attached to the mitochondrial inner membrane and translation products are cotranslationally integrated into the membrane. This chain is Small ribosomal subunit protein uS19m (rsm19), found in Schizosaccharomyces pombe (strain 972 / ATCC 24843) (Fission yeast).